A 987-amino-acid polypeptide reads, in one-letter code: Rho GTPase-activating protein 6 (987 aa).

Positions 1–21 (MSAQSLLHSVFSCSSPASGGT) are enriched in polar residues. Disordered regions lie at residues 1–60 (MSAQ…RGST), 76–117 (SRLA…SGSF), and 144–170 (GSGS…IFSS). Serine 37 bears the Phosphoserine mark. Positions 44 to 57 (GGCGSEMGAEGGLR) are enriched in gly residues. A compositionally biased stretch (polar residues) spans 100-115 (SSFSTPSTPQEKSPSG). The span at 144–159 (GSGSASSRSPASILSS) shows a compositional bias: low complexity. Position 265 is a phosphoserine (serine 265). The interval 324-363 (KQNKELSSSNSSLSSTSETPNESTSPNTPEPAPRARRRGA) is disordered. Over residues 328 to 350 (ELSSSNSSLSSTSETPNESTSPN) the composition is skewed to low complexity. The SH3-binding motif lies at 344–354 (NESTSPNTPEP). Serine 365 is subject to Phosphoserine. The Rho-GAP domain maps to 403–604 (LSLNPIYRQV…KMIENYEALF (202 aa)). The disordered stretch occupies residues 641–676 (DILQTEVSFSMGGRHSSTDSNKASSGDISPYDNNSP). Positions 658 to 676 (TDSNKASSGDISPYDNNSP) are enriched in polar residues. Serine 669, serine 675, serine 682, serine 713, serine 758, serine 776, serine 781, serine 790, and serine 824 each carry phosphoserine. The tract at residues 709-731 (GHLSSPKSKSRESSPGPRLGKEM) is disordered. 2 disordered regions span residues 825–847 (TPHI…PFLS) and 863–953 (WLQS…QDKQ). Residues 939 to 948 (LSSAYSLSAS) show a composition bias toward low complexity. Phosphoserine occurs at positions 941 and 944.

As to expression, expressed in retina and lung.

It localises to the cytoplasm. GTPase activator for the Rho-type GTPases by converting them to an inactive GDP-bound state. Could regulate the interactions of signaling molecules with the actin cytoskeleton. Promotes continuous elongation of cytoplasmic processes during cell motility and simultaneous retraction of the cell body changing the cell morphology. The polypeptide is Rho GTPase-activating protein 6 (Arhgap6) (Mus musculus (Mouse)).